An 86-amino-acid chain; its full sequence is Hepcidin-1 (86 aa).

The first 22 residues, 1-22, serve as a signal peptide directing secretion; that stretch reads MKAFSVAVVLVIACMFILESTA. Positions 23–59 are excised as a propeptide; that stretch reads VPFSEVRTEEVGSFDSPVGEHQQPGGESMHLPEPFRF. Intrachain disulfides connect C68/C84, C71/C74, C72/C80, and C75/C83.

This sequence belongs to the hepcidin family.

The protein localises to the secreted. In terms of biological role, seems to act as a signaling molecule involved in the maintenance of iron homeostasis. Seems to be required in conjunction with HFE to regulate both intestinal iron absorption and iron storage in macrophages. May also have antimicrobial activity. The sequence is that of Hepcidin-1 (hamp1) from Salmo salar (Atlantic salmon).